We begin with the raw amino-acid sequence, 180 residues long: ADP-ribosylation factor 4 (180 aa).

The N-myristoyl glycine moiety is linked to residue Gly-2. Residues 24–31, 67–71, and 126–129 contribute to the GTP site; these read GLDAAGKT, DVGGQ, and NKQD.

This sequence belongs to the small GTPase superfamily. Arf family.

Its subcellular location is the golgi apparatus. GTP-binding protein involved in protein trafficking; may modulate vesicle budding and uncoating within the Golgi apparatus. May be involved in ciliogenesis. This Xenopus laevis (African clawed frog) protein is ADP-ribosylation factor 4 (arf4).